Here is a 492-residue protein sequence, read N- to C-terminus: MAQKTLLIITDGIGHKPSSPHNAFTQAKKPTYDSLFASAPHALLSTHGLSVGLPEGQMGNSEVGHMCIGAGRILYQDLVKISLALKDGSLEKNPTLLGFSSRAKRIHLAGLASDGGVHSHMEHLLGLAQIFSRLGHEVLLHLITDGRDVSPTSSKEFIAQALALESDLIKIATISGRYYAMDRDKRWDRIKRAFGVIARGDSPTSLTPQEYIQAQYQAGITDEFIEPAALGGYQGFEPSDGFVFANFRSDRAREIVSALGGASFEGFDRGAYQPPKTLAMTSYDDSFPFPILFPKEKVEPTLAQVISEAGLSQLHVAETEKYAHVTFFFNGGIETPWENESRVLIPSPSVATYDLKPEMSAPEVAEATLSGMRQGYDFIVVNFANGDMVGHTGNTEAAISAVESVDRELGRLLEEAKKSGYAVILTSDHGNCEEMRDERGSMLTNHTVGEVWCFILAQGVTEIREGGLNQVAPTVLKIMGLPTPKEMDSPLF.

Mn(2+) contacts are provided by D11 and S61. S61 serves as the catalytic Phosphoserine intermediate. Substrate is bound by residues H118, 147-148, R177, R183, 248-251, and K321; these read RD and RSDR. Residues D387, H391, D428, H429, and H446 each contribute to the Mn(2+) site.

The protein belongs to the BPG-independent phosphoglycerate mutase family. As to quaternary structure, monomer. Mn(2+) is required as a cofactor.

It carries out the reaction (2R)-2-phosphoglycerate = (2R)-3-phosphoglycerate. It functions in the pathway carbohydrate degradation; glycolysis; pyruvate from D-glyceraldehyde 3-phosphate: step 3/5. Its function is as follows. Catalyzes the interconversion of 2-phosphoglycerate and 3-phosphoglycerate. The chain is 2,3-bisphosphoglycerate-independent phosphoglycerate mutase from Wolinella succinogenes (strain ATCC 29543 / DSM 1740 / CCUG 13145 / JCM 31913 / LMG 7466 / NCTC 11488 / FDC 602W) (Vibrio succinogenes).